The following is a 512-amino-acid chain: MSEIREARLLKANSLINKGFEPYAETFKISHSTRFLNEKFGYLDNGQEFDLNVSLAGRVLAKRVMGKIAFFTITDQEGKIQLYLEKRIIDDYEINAKLLSFEDLKEIVDIGDWIGVFGTIKKTNKGELSIKVSKWEMLSKSLQPLPDKWHGLTDIEKRYRQRYLDLIVNPLSKTVFKTRAKCISLIRRWLDEKNFLEIETPILQSEAGGAEARPFITHHNTLDIPLYLRIATELHLKRMVVGGFEKVYELGRIFRNEGVSTKHNPEFTSVEIYQAFSNYIDMMNLTEDLIKNIVLSCCDSLVINYQDKVIDFSKPWKRISMKNVVKEYTGIDFDSFDGDLNKAKKFSEEINIEISPKINTLGRLLNEVFEQKVESQLIEPTFVTDYPIEISPLARRHPKNKEMVQRFELFIAGRELANAFSELIDPVDQRQRMQLQQSLRDAGDLEAHCIDEDFLQALEIGMPPTGGLGIGIDRLVMLLTNSSSIRDVIPFPLLKPELTSNKSEKSTSNEVK.

The Mg(2+) site is built by glutamate 408 and glutamate 415.

The protein belongs to the class-II aminoacyl-tRNA synthetase family. In terms of assembly, homodimer. It depends on Mg(2+) as a cofactor.

It is found in the cytoplasm. It carries out the reaction tRNA(Lys) + L-lysine + ATP = L-lysyl-tRNA(Lys) + AMP + diphosphate. The chain is Lysine--tRNA ligase from Prochlorococcus marinus (strain MIT 9515).